A 654-amino-acid chain; its full sequence is Beta-galactosidase-1-like protein (654 aa).

The N-terminal stretch at 1 to 27 is a signal peptide; that stretch reads MAPKKPSCLRSLLLPLSLTLLLPQADT. Asparagine 97 carries an N-linked (GlcNAc...) asparagine glycan. The active-site Proton donor is the glutamate 186. Asparagine 243 is a glycosylation site (N-linked (GlcNAc...) asparagine). The active-site Nucleophile is glutamate 264.

It belongs to the glycosyl hydrolase 35 family.

It is found in the secreted. In terms of biological role, probable glycosyl hydrolase. The polypeptide is Beta-galactosidase-1-like protein (GLB1L) (Macaca fascicularis (Crab-eating macaque)).